Reading from the N-terminus, the 149-residue chain is Dehydrin Rab15 (149 aa).

The disordered stretch occupies residues 1-149 (MEFQGQHDNP…KIKEKLPGQH (149 aa)). Basic and acidic residues predominate over residues 78 to 93 (KEKIKEKLPGGHKDNQ). Residues 100-117 (TGTGGAYGPGTGTGGAYG) are compositionally biased toward gly residues. Positions 132-149 (GEKKGIMDKIKEKLPGQH) are enriched in basic and acidic residues.

This sequence belongs to the plant dehydrin family.

The sequence is that of Dehydrin Rab15 (RAB15) from Triticum aestivum (Wheat).